Reading from the N-terminus, the 481-residue chain is 2-methylisoborneol synthase (481 aa).

Disordered regions lie at residues 1 to 125 (MPDS…PVGP) and 139 to 160 (QAAVPPDAVPAPSGPSAEGPVV). Over residues 11–23 (TSLPEQPPAPPAT) the composition is skewed to pro residues. Positions 24 to 33 (APDAPAATVT) are enriched in low complexity. Composition is skewed to pro residues over residues 52–64 (VTRPSSPPSPSMP) and 71–104 (SSPPSSSMPPASWAPPSPLSPPAPSLPPTSPPAT). A compositionally biased stretch (low complexity) spans 105 to 114 (APETSAATGS). Residues Asp-238, Asp-239, Glu-243, Asn-386, Ser-390, and Glu-394 each contribute to the Mg(2+) site.

This sequence belongs to the terpene synthase family. 2-methylisoborneol synthase subfamily. The cofactor is Mg(2+).

The catalysed reaction is (E)-2-methylgeranyl diphosphate + H2O = 2-methylisoborneol + diphosphate. Functionally, catalyzes the cyclization of 2-methylgeranyl diphosphate (2-MeGPP) to 2-methylisoborneol (2-MIB), which likely involves the intermediacy of 2-methyllinalyl diphosphate. The protein is 2-methylisoborneol synthase (tpc) of Streptomyces lasalocidi (Streptomyces lasaliensis).